The following is a 410-amino-acid chain: Probable intron-encoded endonuclease bI1 (410 aa).

The segment at M1–G131 is COB exon 1 encoded. The next 3 helical transmembrane spans lie at F32–M52, G75–L95, and L112–F132. The tract at residues F132–K410 is COB intron 1 encoded. One can recognise a GIY-YIG domain in the interval P196–I286.

To endonucleases of group I introns of fungi and phage. The mature protein may arise from proteolytic cleavage of an in-frame translation of COB exon 1 plus intron 1, containing the bI1 open reading frame.

It localises to the mitochondrion. Its subcellular location is the membrane. In terms of biological role, mitochondrial DNA endonuclease involved in intron homing. In Mycosarcoma maydis (Corn smut fungus), this protein is Probable intron-encoded endonuclease bI1 (bI1).